A 369-amino-acid polypeptide reads, in one-letter code: N-succinylamino acid racemase (369 aa).

Lysine 163 (proton donor) is an active-site residue. Positions 188, 213, and 238 each coordinate Mg(2+). Catalysis depends on lysine 262, which acts as the Proton acceptor.

Belongs to the mandelate racemase/muconate lactonizing enzyme family. MenC type 2 subfamily. As to quaternary structure, homooctamer. Tetramer of dimers. Requires a divalent metal cation as cofactor.

The catalysed reaction is (1R,6R)-6-hydroxy-2-succinyl-cyclohexa-2,4-diene-1-carboxylate = 2-succinylbenzoate + H2O. Acts as a N-succinylamino acid racemase (NSAR) that catalyzes the racemization of N-succinyl-L-phenylglycine. Also converts 2-succinyl-6-hydroxy-2,4-cyclohexadiene-1-carboxylate (SHCHC) to 2-succinylbenzoate (OSB). Catalyzes both N-succinylamino acid racemization and OSB synthesis at equivalent rates. However, NSAR activity is probably the protein's biological function, because menaquinone biosynthesis genes are missing in this species. This chain is N-succinylamino acid racemase, found in Thermus thermophilus (strain ATCC 27634 / DSM 579 / HB8).